Reading from the N-terminus, the 564-residue chain is MNHDQAVLNRIWCETLFEELYRFGVRDVCVAPGSRSTPLALEANAHTSLKLHTHFDERGLGFLALGLAKASQRPVAVVVTSGTAVANLLPAVAEAGLTGEKLVLLTADRPIELVGCGANQAIAQQGIFSNHVCASLNLPSPNTQTSLNWLLTSVDQVLHQQAVSGHAVHINCPFPEPLYSNAPKSIYQSYIDTVAVWRAEGGIYSNKQMPLPMPTSIAEIEQRKAVVVIGSVTLQEAKQAHQFAAQMGWPVLCDPQSGTTSDWSGFDIWLQNPAARAQLSQCDLIIQFGRRLVSKRLHQWLEQQVQAGCDYWYVSPDFERDNQSHLPQQHFVCSIAAWLNVVTNREVQPVAWANELPRFSAEVNKQAREIAQSSLCEMMIALHLSSLVGSADLFLGNSLFVRMVDMVGQLHGVETFTNRGASGIDGLFATASGVQRARSNPMLLMIGDTSALYDLNSLALYSHQETPVVIVVTNNDGGAIFDLLPVPPQQKQALYQMPHGYRFEFAAKQFGLDYVRPTSMTELTERIVGHFAHGCGALLVEVNTPPNQASQHIKQLADHVRALV.

It belongs to the TPP enzyme family. MenD subfamily. In terms of assembly, homodimer. It depends on Mg(2+) as a cofactor. The cofactor is Mn(2+). Requires thiamine diphosphate as cofactor.

It catalyses the reaction isochorismate + 2-oxoglutarate + H(+) = 5-enolpyruvoyl-6-hydroxy-2-succinyl-cyclohex-3-ene-1-carboxylate + CO2. It participates in quinol/quinone metabolism; 1,4-dihydroxy-2-naphthoate biosynthesis; 1,4-dihydroxy-2-naphthoate from chorismate: step 2/7. The protein operates within quinol/quinone metabolism; menaquinone biosynthesis. Its function is as follows. Catalyzes the thiamine diphosphate-dependent decarboxylation of 2-oxoglutarate and the subsequent addition of the resulting succinic semialdehyde-thiamine pyrophosphate anion to isochorismate to yield 2-succinyl-5-enolpyruvyl-6-hydroxy-3-cyclohexene-1-carboxylate (SEPHCHC). This chain is 2-succinyl-5-enolpyruvyl-6-hydroxy-3-cyclohexene-1-carboxylate synthase, found in Vibrio vulnificus (strain YJ016).